A 429-amino-acid chain; its full sequence is Zinc finger protein 385C (429 aa).

Residues 77-107 (ISCNICHLRFNSANQAEAHYKGHRHARKLKA) form a Matrin-type 1 zinc finger. Disordered stretches follow at residues 109–224 (EAAK…GRGE), 258–295 (GHQGAPRRGRGRPVSRGGTGHKTKRVIGNRGGRQGPSP), and 311–340 (QLKQHMSSRRHKDRLAGKPPKSSSQHNKLQ). Low complexity predominate over residues 125 to 146 (TVVSSASPPASGSPGTPQSKGP). The segment covering 147 to 162 (ASPPLGPSLQLPPTPD) has biased composition (pro residues). The segment covering 181–193 (CDAAASSSSSSCP) has biased composition (low complexity). Residues 225-259 (KGRLYCPTCKVTVNSASQLQAHNTGAKHRWMVEGH) form a Matrin-type 2 zinc finger. The segment covering 262 to 284 (APRRGRGRPVSRGGTGHKTKRVI) has biased composition (basic residues). The segment at 297 to 327 (FHCALCQLHVNSETQLKQHMSSRRHKDRLAG) adopts a Matrin-type 3 zinc-finger fold.

It localises to the nucleus. This Mus musculus (Mouse) protein is Zinc finger protein 385C.